The chain runs to 188 residues: Pyridoxal 5'-phosphate synthase subunit PdxT (188 aa).

An L-glutamine-binding site is contributed by 46–48 (GES). Cys-78 functions as the Nucleophile in the catalytic mechanism. L-glutamine contacts are provided by residues Arg-105 and 134–135 (IR). Catalysis depends on charge relay system residues His-170 and Glu-172.

The protein belongs to the glutaminase PdxT/SNO family. In the presence of PdxS, forms a dodecamer of heterodimers. Only shows activity in the heterodimer.

The enzyme catalyses aldehydo-D-ribose 5-phosphate + D-glyceraldehyde 3-phosphate + L-glutamine = pyridoxal 5'-phosphate + L-glutamate + phosphate + 3 H2O + H(+). The catalysed reaction is L-glutamine + H2O = L-glutamate + NH4(+). It participates in cofactor biosynthesis; pyridoxal 5'-phosphate biosynthesis. Its function is as follows. Catalyzes the hydrolysis of glutamine to glutamate and ammonia as part of the biosynthesis of pyridoxal 5'-phosphate. The resulting ammonia molecule is channeled to the active site of PdxS. The sequence is that of Pyridoxal 5'-phosphate synthase subunit PdxT from Thermotoga maritima (strain ATCC 43589 / DSM 3109 / JCM 10099 / NBRC 100826 / MSB8).